The following is a 565-amino-acid chain: Periplasmic trehalase (565 aa).

A signal peptide spans 1 to 30; the sequence is MKSPAPSRPQKMALIPACIFLCFAALSVQA. Residues Arg-152, 159-160, Asn-196, 205-207, 277-279, and Gly-310 contribute to the substrate site; these read WD, RSQ, and RPE. Active-site proton donor/acceptor residues include Asp-312 and Glu-496. Glu-511 is a binding site for substrate. The interval 539 to 565 is disordered; the sequence is CDNVPATRPLSESTTQPVKQKEAEPTP.

It belongs to the glycosyl hydrolase 37 family. In terms of assembly, monomer.

It localises to the periplasm. The enzyme catalyses alpha,alpha-trehalose + H2O = alpha-D-glucose + beta-D-glucose. In terms of biological role, provides the cells with the ability to utilize trehalose at high osmolarity by splitting it into glucose molecules that can subsequently be taken up by the phosphotransferase-mediated uptake system. The polypeptide is Periplasmic trehalase (Escherichia coli O6:H1 (strain CFT073 / ATCC 700928 / UPEC)).